The chain runs to 82 residues: ATP synthase subunit c (82 aa).

2 consecutive transmembrane segments (helical) span residues 7–27 (FVALAAGLIIGLGAVGACIGI) and 53–73 (FLLAGLIDAAFLIGVGIAMMF).

Belongs to the ATPase C chain family. F-type ATPases have 2 components, F(1) - the catalytic core - and F(0) - the membrane proton channel. F(1) has five subunits: alpha(3), beta(3), gamma(1), delta(1), epsilon(1). F(0) has three main subunits: a(1), b(2) and c(10-14). The alpha and beta chains form an alternating ring which encloses part of the gamma chain. F(1) is attached to F(0) by a central stalk formed by the gamma and epsilon chains, while a peripheral stalk is formed by the delta and b chains.

The protein localises to the cell inner membrane. In terms of biological role, f(1)F(0) ATP synthase produces ATP from ADP in the presence of a proton or sodium gradient. F-type ATPases consist of two structural domains, F(1) containing the extramembraneous catalytic core and F(0) containing the membrane proton channel, linked together by a central stalk and a peripheral stalk. During catalysis, ATP synthesis in the catalytic domain of F(1) is coupled via a rotary mechanism of the central stalk subunits to proton translocation. Its function is as follows. Key component of the F(0) channel; it plays a direct role in translocation across the membrane. A homomeric c-ring of between 10-14 subunits forms the central stalk rotor element with the F(1) delta and epsilon subunits. The polypeptide is ATP synthase subunit c (Polaromonas sp. (strain JS666 / ATCC BAA-500)).